The chain runs to 156 residues: Small ribosomal subunit protein uS7 (156 aa).

The protein belongs to the universal ribosomal protein uS7 family. As to quaternary structure, part of the 30S ribosomal subunit. Contacts proteins S9 and S11.

Its function is as follows. One of the primary rRNA binding proteins, it binds directly to 16S rRNA where it nucleates assembly of the head domain of the 30S subunit. Is located at the subunit interface close to the decoding center, probably blocks exit of the E-site tRNA. This chain is Small ribosomal subunit protein uS7, found in Thermodesulfovibrio yellowstonii (strain ATCC 51303 / DSM 11347 / YP87).